The following is a 249-amino-acid chain: Photosystem I-associated linker protein CpcL (249 aa).

The PBS-linker domain maps to Val-11–Lys-189. Residues Val-223–Ile-247 form a helical membrane-spanning segment.

It belongs to the phycobilisome linker protein family. Part of a specialized phycobilisome (PBS), a structure that is usually composed of two distinct substructures: a core complex and a number of rods radiating from the core. This protein is part of a core-less PBS rod (called CpcL-PBS) with on average 5 stacked phycocyanin hexamers (PC, CpcA and CpcB). Linker CpcL connects the PC stack to the thylakoid, the hexamers are linked by 1 copy of CpcC1, 3 copies of CpcC2 and the stack is terminated by a single copy of CpcD. Ferredoxin--NADP reductase (petH) is also part of the complex. CpcL-PBS has no central core proteins (allophycocyanin ApcA, ApcB) nor phycobiliprotein ApcE.

The protein resides in the cellular thylakoid membrane. Rod linker protein, associated with phycocyanin. Linker polypeptides determine the state of aggregation and the location of the disk-shaped phycobiliprotein units within the phycobilisome and modulate their spectroscopic properties in order to mediate a directed and optimal energy transfer. Plays a role in energy transfer from the phycobilisome to photosystem I (PSI). Although able to transfer energy to both photosystems, this is predominantly a PSI antenna. This is Photosystem I-associated linker protein CpcL from Synechocystis sp. (strain ATCC 27184 / PCC 6803 / Kazusa).